The following is a 362-amino-acid chain: MHSFASLLRYGLAAGATLASASPIEARDSCTFTTAAAAKAGKAKCSTITLDSIKVPAGTTLDLTGLTSGTKVIFEGTTTFDYEDWAGPLISMSGKDITVTGASGHLINCDGSRWWDGKGTSGKKKPKFFYAHGLDSSSITGLNIKNTPLMAFSVESDDITLTDITINNADGDSLGGHNTDAFDVGNSVGVNIIKPWVHNQDDCLAINSGENIWFTGGTCIGGHGLSIGSVGDRSNNVVKNVTIEHSTVSNSENAVRIKTISGATGSVSEITYSNIVMSGISDYGVVIQQDYEDGKPTGKPTNGVTITDVKLESVTGTVDSKATDIYLLCGSGSCSDWTWDDVKVTGGKKSSACKNLPSVASC.

An N-terminal signal peptide occupies residues M1 to S20. Positions A21–R27 are excised as a propeptide. Residues C30 and C45 are joined by a disulfide bond. The PbH1 1 repeat unit spans residues S156–N186. The active-site Proton donor is the D201. A disulfide bond links C203 and C219. PbH1 repeat units lie at residues G209–S229, V238–T259, V267–Q289, and T301–A322. Residue H223 is part of the active site. An N-linked (GlcNAc...) asparagine glycan is attached at N240. Cystine bridges form between C329-C334 and C353-C362.

Belongs to the glycosyl hydrolase 28 family.

Its subcellular location is the secreted. The catalysed reaction is (1,4-alpha-D-galacturonosyl)n+m + H2O = (1,4-alpha-D-galacturonosyl)n + (1,4-alpha-D-galacturonosyl)m.. In terms of biological role, involved in maceration and soft-rotting of plant tissue. Hydrolyzes the 1,4-alpha glycosidic bonds of de-esterified pectate in the smooth region of the plant cell wall. The chain is Endopolygalacturonase II (pgaII) from Aspergillus awamori (Black koji mold).